The following is a 601-amino-acid chain: Probable HECT-type ubiquitin ligase-interacting protein creD (601 aa).

Disordered regions lie at residues 374–397 (EVDP…GTLS) and 454–496 (VSTD…GMAT). The span at 455–473 (STDSFGPSSGSNSQSPASP) shows a compositional bias: low complexity. The segment covering 475–489 (LSRRPSDEGYHDHDY) has biased composition (basic and acidic residues).

This sequence belongs to the arrestin family. In terms of assembly, interacts with hulA.

Its function is as follows. Component of the regulatory network controlling carbon source utilization through ubiquitination and deubiquitination involving creA, creB, creC, creD and acrB. May be involved in signaling by recognizing appropriately phosphorylated substrates via its arrestin domains and then recruit a HECT-type ubiquitin ligase such as hulA, leading to ubiquitination of the substrate, providing a link between ubiquitination and phosphorylation in protein regulation and stability. This Aspergillus fumigatus (strain CBS 144.89 / FGSC A1163 / CEA10) (Neosartorya fumigata) protein is Probable HECT-type ubiquitin ligase-interacting protein creD (creD).